A 153-amino-acid polypeptide reads, in one-letter code: Endoribonuclease YbeY (153 aa).

Zn(2+)-binding residues include H112, H116, and H122.

The protein belongs to the endoribonuclease YbeY family. Zn(2+) serves as cofactor.

It is found in the cytoplasm. Its function is as follows. Single strand-specific metallo-endoribonuclease involved in late-stage 70S ribosome quality control and in maturation of the 3' terminus of the 16S rRNA. This chain is Endoribonuclease YbeY, found in Persephonella marina (strain DSM 14350 / EX-H1).